Here is a 41-residue protein sequence, read N- to C-terminus: uncharacterized protein (41 aa).

The protein resides in the plastid. It is found in the chloroplast. This is an uncharacterized protein from Trieres chinensis (Marine centric diatom).